The sequence spans 1758 residues: Y' element ATP-dependent helicase YIL177C (1758 aa).

The Helicase ATP-binding domain maps to 668–845 (EIYMADTPSV…LQRIGLTGLA (178 aa)). ATP is bound at residue 681 to 688 (APPGYGKT). The Helicase C-terminal domain maps to 900–1051 (ALKLLLALFE…EFYGLESKKG (152 aa)). The span at 1142-1360 (NVRTNATTNA…ATTTESTNAS (219 aa)) shows a compositional bias: low complexity. Residues 1142–1384 (NVRTNATTNA…RFHPVTDINK (243 aa)) form a disordered region. Residues 1361–1384 (AKEDANKDGNAEDNRFHPVTDINK) are compositionally biased toward basic and acidic residues.

It belongs to the helicase family. Yeast subtelomeric Y' repeat subfamily.

Functionally, catalyzes DNA unwinding and is involved in telomerase-independent telomere maintenance. The polypeptide is Y' element ATP-dependent helicase YIL177C (Saccharomyces cerevisiae (strain ATCC 204508 / S288c) (Baker's yeast)).